The primary structure comprises 346 residues: Protein MelA (346 aa).

VOC domains lie at 12–141 (GIEF…DFEA) and 155–305 (EVDH…IFTK). Residues His-158, His-237, and Glu-314 each contribute to the Fe cation site.

Belongs to the 4HPPD family. Fe cation serves as cofactor.

It localises to the cytoplasm. It functions in the pathway pigment biosynthesis; melanin biosynthesis. This chain is Protein MelA (melA), found in Shewanella colwelliana (Alteromonas colwelliana).